Reading from the N-terminus, the 359-residue chain is Small ribosomal subunit biogenesis GTPase RsgA (359 aa).

The 159-residue stretch at 101–259 (KRKGSQAIAS…LMDNPGIREV (159 aa)) folds into the CP-type G domain. GTP contacts are provided by residues 149–152 (NKKD) and 201–209 (GSSGAGKST). Residues Cys-284, Cys-289, His-291, and Cys-297 each coordinate Zn(2+). Positions 331 to 359 (DPEEARKKKQKDKQMSKALQKRLKDKGRK) are disordered. The segment covering 349-359 (LQKRLKDKGRK) has biased composition (basic residues).

Belongs to the TRAFAC class YlqF/YawG GTPase family. RsgA subfamily. Monomer. Associates with 30S ribosomal subunit, binds 16S rRNA. It depends on Zn(2+) as a cofactor.

Its subcellular location is the cytoplasm. In terms of biological role, one of several proteins that assist in the late maturation steps of the functional core of the 30S ribosomal subunit. Helps release RbfA from mature subunits. May play a role in the assembly of ribosomal proteins into the subunit. Circularly permuted GTPase that catalyzes slow GTP hydrolysis, GTPase activity is stimulated by the 30S ribosomal subunit. The polypeptide is Small ribosomal subunit biogenesis GTPase RsgA (Leptospira interrogans serogroup Icterohaemorrhagiae serovar Lai (strain 56601)).